The primary structure comprises 228 residues: 2,3-bisphosphoglycerate-dependent phosphoglycerate mutase (228 aa).

Residues 8–15 (RHGQSEWN), 21–22 (TG), R60, 87–90 (ERHY), K98, 114–115 (RR), and 180–181 (GN) each bind substrate. The active-site Tele-phosphohistidine intermediate is H9. E87 acts as the Proton donor/acceptor in catalysis.

The protein belongs to the phosphoglycerate mutase family. BPG-dependent PGAM subfamily. Homodimer.

It carries out the reaction (2R)-2-phosphoglycerate = (2R)-3-phosphoglycerate. It participates in carbohydrate degradation; glycolysis; pyruvate from D-glyceraldehyde 3-phosphate: step 3/5. Catalyzes the interconversion of 2-phosphoglycerate and 3-phosphoglycerate. This Zymomonas mobilis subsp. mobilis (strain ATCC 31821 / ZM4 / CP4) protein is 2,3-bisphosphoglycerate-dependent phosphoglycerate mutase.